The chain runs to 213 residues: Nicolin-1 (213 aa).

In terms of assembly, part of the neuronal tubulin polyglutamylase complex which contains TPGS1, TPGS2, TTLL1, LRRC49 and NICN1. As to expression, high expression level is found in brain, testis, liver and kidney. Weak expression in spleen, leukocytes, small intestin and colon.

The protein localises to the nucleus. The chain is Nicolin-1 (Nicn1) from Mus musculus (Mouse).